Here is a 355-residue protein sequence, read N- to C-terminus: 4-dimethylallyltryptophan N-methyltransferase easF (355 aa).

This sequence belongs to the methyltransferase superfamily. Homodimer.

It carries out the reaction 4-(3-methylbut-2-enyl)-L-tryptophan + S-adenosyl-L-methionine = 4-(3-methylbut-2-enyl)-L-abrine + S-adenosyl-L-homocysteine + H(+). The protein operates within alkaloid biosynthesis; ergot alkaloid biosynthesis. 4-dimethylallyltryptophan N-methyltransferase; part of the gene cluster that mediates the biosynthesis of fungal ergot alkaloid. DmaW catalyzes the first step of ergot alkaloid biosynthesis by condensing dimethylallyl diphosphate (DMAP) and tryptophan to form 4-dimethylallyl-L-tryptophan. The second step is catalyzed by the methyltransferase easF that methylates 4-dimethylallyl-L-tryptophan in the presence of S-adenosyl-L-methionine, resulting in the formation of 4-dimethylallyl-L-abrine. The catalase easC and the FAD-dependent oxidoreductase easE then transform 4-dimethylallyl-L-abrine to chanoclavine-I which is further oxidized by easD in the presence of NAD(+), resulting in the formation of chanoclavine-I aldehyde. Agroclavine dehydrogenase easG then mediates the conversion of chanoclavine-I aldehyde to agroclavine via a non-enzymatic adduct reaction: the substrate is an iminium intermediate that is formed spontaneously from chanoclavine-I aldehyde in the presence of glutathione. Further conversion of agroclavine to paspalic acid is a two-step process involving oxidation of agroclavine to elymoclavine and of elymoclavine to paspalic acid, the second step being performed by the elymoclavine oxidase cloA. However, cloA does not encode a functional enzyme indicating that C.fusiformis terminates its ergot alkaloid pathway at elymoclavine. In Claviceps fusiformis (Ergot fungus), this protein is 4-dimethylallyltryptophan N-methyltransferase easF.